The chain runs to 335 residues: Calcium/calmodulin-dependent protein kinase type I (335 aa).

A Protein kinase domain is found at Y31–L291. L37–V45 is an ATP binding site. D154 serves as the catalytic Proton acceptor. T192 carries the post-translational modification Phosphothreonine; by autocatalysis. The calmodulin-binding stretch occupies residues N310–K334.

The protein belongs to the protein kinase superfamily. CAMK Ser/Thr protein kinase family. CaMK subfamily.

The protein resides in the cytoplasm. The enzyme catalyses L-seryl-[protein] + ATP = O-phospho-L-seryl-[protein] + ADP + H(+). The catalysed reaction is L-threonyl-[protein] + ATP = O-phospho-L-threonyl-[protein] + ADP + H(+). Its function is as follows. Important in cell cycle regulation. This is Calcium/calmodulin-dependent protein kinase type I (cmk1) from Schizosaccharomyces pombe (strain 972 / ATCC 24843) (Fission yeast).